A 111-amino-acid polypeptide reads, in one-letter code: Aspartate 1-decarboxylase (111 aa).

The Schiff-base intermediate with substrate; via pyruvic acid role is filled by serine 25. At serine 25 the chain carries Pyruvic acid (Ser). Residue threonine 57 participates in substrate binding. Residue tyrosine 58 is the Proton donor of the active site. A substrate-binding site is contributed by 73–75 (GPA).

It belongs to the PanD family. Heterooctamer of four alpha and four beta subunits. It depends on pyruvate as a cofactor. Is synthesized initially as an inactive proenzyme, which is activated by self-cleavage at a specific serine bond to produce a beta-subunit with a hydroxyl group at its C-terminus and an alpha-subunit with a pyruvoyl group at its N-terminus.

The protein localises to the cytoplasm. It catalyses the reaction L-aspartate + H(+) = beta-alanine + CO2. It participates in cofactor biosynthesis; (R)-pantothenate biosynthesis; beta-alanine from L-aspartate: step 1/1. In terms of biological role, catalyzes the pyruvoyl-dependent decarboxylation of aspartate to produce beta-alanine. The protein is Aspartate 1-decarboxylase of Francisella tularensis subsp. holarctica (strain LVS).